The following is a 377-amino-acid chain: MTPSEIHADERLVHVPLGERAYDILIGPGLIGRAGGEISARLKGRRAAIITDEHVAPLYLEGLMDGLQTDGIEAVSLTLPAGEKTKSFEHLVTVCDAVLSARVERNDAVIALGGGVIGDLAGFAAGIVRRGVRFVQIPTSLLSQVDSSVGGKTGINTRHGKNLVGVFHQPDLVLADTAVLDTLSPREFRAGYAEVVKYGLIDKPDFFFWLEKNWDDIRTGGPARIEAIATSCQAKADVVVADEKENGVRALLNLGHTFGHALEAATNYDSKRLVHGEGVAIGMVLAHQFSARLNLASPDDAARVEAHLKAVGLPTTMKDIPGELPPVETLMAAIAQDKKVKGGKLTFILTHGIGQSFVADDVASSEVQSFLSEKHPG.

NAD(+) contacts are provided by residues 115 to 119 (GVIGD), 139 to 140 (TS), Lys-152, and Lys-161. Zn(2+)-binding residues include Glu-194, His-256, and His-275.

It belongs to the sugar phosphate cyclases superfamily. Dehydroquinate synthase family. NAD(+) serves as cofactor. Requires Co(2+) as cofactor. The cofactor is Zn(2+).

The protein resides in the cytoplasm. The enzyme catalyses 7-phospho-2-dehydro-3-deoxy-D-arabino-heptonate = 3-dehydroquinate + phosphate. Its pathway is metabolic intermediate biosynthesis; chorismate biosynthesis; chorismate from D-erythrose 4-phosphate and phosphoenolpyruvate: step 2/7. Its function is as follows. Catalyzes the conversion of 3-deoxy-D-arabino-heptulosonate 7-phosphate (DAHP) to dehydroquinate (DHQ). This chain is 3-dehydroquinate synthase, found in Agrobacterium fabrum (strain C58 / ATCC 33970) (Agrobacterium tumefaciens (strain C58)).